The primary structure comprises 159 residues: MEIDFMRILATIINFIILILILKHFFWDKIKRAIDARQEAIDETILKADEDAEKARRLRLDNERILKSAKEEGRKLREEQKKEADRIYKEIVDDAHREAEAIINRANIEIQREEEKVKYELKQQVVDISVMLSEKALGESIDESKHRELINDFIEKVGI.

Residues Ile-8–Asp-28 traverse the membrane as a helical segment.

The protein belongs to the ATPase B chain family. In terms of assembly, F-type ATPases have 2 components, F(1) - the catalytic core - and F(0) - the membrane proton channel. F(1) has five subunits: alpha(3), beta(3), gamma(1), delta(1), epsilon(1). F(0) has three main subunits: a(1), b(2) and c(10-14). The alpha and beta chains form an alternating ring which encloses part of the gamma chain. F(1) is attached to F(0) by a central stalk formed by the gamma and epsilon chains, while a peripheral stalk is formed by the delta and b chains.

It is found in the cell membrane. In terms of biological role, f(1)F(0) ATP synthase produces ATP from ADP in the presence of a proton or sodium gradient. F-type ATPases consist of two structural domains, F(1) containing the extramembraneous catalytic core and F(0) containing the membrane proton channel, linked together by a central stalk and a peripheral stalk. During catalysis, ATP synthesis in the catalytic domain of F(1) is coupled via a rotary mechanism of the central stalk subunits to proton translocation. Component of the F(0) channel, it forms part of the peripheral stalk, linking F(1) to F(0). This chain is ATP synthase subunit b, found in Clostridium perfringens (strain ATCC 13124 / DSM 756 / JCM 1290 / NCIMB 6125 / NCTC 8237 / Type A).